Here is a 278-residue protein sequence, read N- to C-terminus: Coiled-coil domain-containing protein 121 (278 aa).

Coiled coils occupy residues 1 to 30 (MTDL…REKL) and 105 to 243 (QAMR…LIQA). Residues 253–278 (QCLNRQDVPKTTPSLPQGTKSRINPK) are disordered.

The polypeptide is Coiled-coil domain-containing protein 121 (CCDC121) (Homo sapiens (Human)).